The sequence spans 157 residues: Phosphopantetheine adenylyltransferase (157 aa).

Substrate is bound at residue S9. Residues 9-10 and H17 contribute to the ATP site; that span reads SF. Residues K41, L73, and K87 each contribute to the substrate site. ATP-binding positions include 88 to 90, E98, and 123 to 129; these read GLR and YSFLSSS.

Belongs to the bacterial CoaD family. Homohexamer. Requires Mg(2+) as cofactor.

It is found in the cytoplasm. It catalyses the reaction (R)-4'-phosphopantetheine + ATP + H(+) = 3'-dephospho-CoA + diphosphate. It participates in cofactor biosynthesis; coenzyme A biosynthesis; CoA from (R)-pantothenate: step 4/5. Functionally, reversibly transfers an adenylyl group from ATP to 4'-phosphopantetheine, yielding dephospho-CoA (dPCoA) and pyrophosphate. The polypeptide is Phosphopantetheine adenylyltransferase (Alkaliphilus oremlandii (strain OhILAs) (Clostridium oremlandii (strain OhILAs))).